The primary structure comprises 244 residues: Glutathione S-transferase theta-2B (244 aa).

Positions 2 to 82 (GLELFLDLVS…YLSCKYQTPD (81 aa)) constitute a GST N-terminal domain. Residues 40-41 (HK), 53-54 (KL), 66-67 (ES), and 104-107 (DCIR) each bind glutathione. In terms of domain architecture, GST C-terminal spans 88–224 (DLQARARVHE…SILEQAAKKT (137 aa)).

It belongs to the GST superfamily. Theta family. Homodimer. In terms of tissue distribution, expressed at low levels in liver. In lung, expressed at low levels in ciliated bronchiolar cells, alveolar macrophages and alveolar type II cells.

Its subcellular location is the cytoplasm. The protein resides in the cytosol. The catalysed reaction is RX + glutathione = an S-substituted glutathione + a halide anion + H(+). In terms of biological role, conjugation of reduced glutathione to a wide number of exogenous and endogenous hydrophobic electrophiles. Has a sulfatase activity. The sequence is that of Glutathione S-transferase theta-2B (GSTT2B) from Homo sapiens (Human).